The sequence spans 291 residues: Acetylglutamate kinase (291 aa).

Residues 65–66 (GG), Arg87, and Asn186 each bind substrate.

It belongs to the acetylglutamate kinase family. ArgB subfamily.

The protein resides in the cytoplasm. It catalyses the reaction N-acetyl-L-glutamate + ATP = N-acetyl-L-glutamyl 5-phosphate + ADP. It functions in the pathway amino-acid biosynthesis; L-arginine biosynthesis; N(2)-acetyl-L-ornithine from L-glutamate: step 2/4. Catalyzes the ATP-dependent phosphorylation of N-acetyl-L-glutamate. This chain is Acetylglutamate kinase, found in Mycolicibacterium vanbaalenii (strain DSM 7251 / JCM 13017 / BCRC 16820 / KCTC 9966 / NRRL B-24157 / PYR-1) (Mycobacterium vanbaalenii).